Here is a 243-residue protein sequence, read N- to C-terminus: Triosephosphate isomerase (243 aa).

A substrate-binding site is contributed by 9–11 (NWK). H96 functions as the Electrophile in the catalytic mechanism. E165 functions as the Proton acceptor in the catalytic mechanism. Substrate-binding positions include G171, S204, and 225-226 (GG).

The protein belongs to the triosephosphate isomerase family. As to quaternary structure, homodimer.

Its subcellular location is the cytoplasm. The enzyme catalyses D-glyceraldehyde 3-phosphate = dihydroxyacetone phosphate. It participates in carbohydrate biosynthesis; gluconeogenesis. The protein operates within carbohydrate degradation; glycolysis; D-glyceraldehyde 3-phosphate from glycerone phosphate: step 1/1. In terms of biological role, involved in the gluconeogenesis. Catalyzes stereospecifically the conversion of dihydroxyacetone phosphate (DHAP) to D-glyceraldehyde-3-phosphate (G3P). The chain is Triosephosphate isomerase from Prochlorococcus marinus (strain MIT 9211).